Here is a 152-residue protein sequence, read N- to C-terminus: MSNLVYFSSVSENTHRFVEKLGLPATRIPIHGRIQVDEPYVLVLPTYGGGHANGPDPDRGGYVPKQVIAFLNDEHNRSLIRGVIAAGNTNFGAEFGYAGVIVSRKCGVPFLYRFELMGTTDDVFAVRQGLTDFWADARKDQTCHQPSQLQNL.

Belongs to the NrdI family.

Functionally, probably involved in ribonucleotide reductase function. The sequence is that of Protein NrdI from Mycolicibacterium vanbaalenii (strain DSM 7251 / JCM 13017 / BCRC 16820 / KCTC 9966 / NRRL B-24157 / PYR-1) (Mycobacterium vanbaalenii).